Here is a 578-residue protein sequence, read N- to C-terminus: Galectin-3-binding protein (578 aa).

An N-terminal signal peptide occupies residues 1–18; sequence MAFLWLFSLWLLVPGTQG. One can recognise an SRCR domain in the interval 24-124; sequence MRLVNGASAN…HEKDAGVVCS (101 aa). Intrachain disulfides connect C49–C113, C62–C123, and C93–C103. N69 and N102 each carry an N-linked (GlcNAc...) asparagine glycan. A BTB domain is found at 153-221; the sequence is CDLFIQVTGQ…FYSRRIEVTM (69 aa). The 101-residue stretch at 260–360 folds into the BACK domain; sequence PLELYAYAQA…VLPQELFELQ (101 aa). N362 and N398 each carry an N-linked (GlcNAc...) asparagine glycan.

As to quaternary structure, homodimers and homomultimers. The multimers form ring-like structures with a diameter of 30-40 nm. Binds LGALS1 and LGALS3. Binds ITGB1, COL4A1, COL5A1, COL6A1, FN1 and NID. The unglycosylated form interacts with PDE4DIP; this interaction, which is PDE4DIP isoform-specific, may connect a pericentrosomal complex to the gamma-tubulin ring complex (gamma-TuRC) to promote microtubule assembly and acetylation.

The protein localises to the secreted. It localises to the extracellular space. It is found in the extracellular matrix. Functionally, promotes integrin-mediated cell adhesion. May stimulate host defense against viruses and tumor cells. The sequence is that of Galectin-3-binding protein (LGALS3BP) from Mesocricetus auratus (Golden hamster).